Here is a 474-residue protein sequence, read N- to C-terminus: Bifunctional protein HldE (474 aa).

Positions 1-321 are ribokinase; sequence MILSSSLRPT…EYLHSSHQGE (321 aa). Position 198 to 201 (198 to 201) interacts with ATP; that stretch reads NKKE. The active site involves aspartate 266. Residues 348-474 are cytidylyltransferase; that stretch reads FTNGCFDILH…SAVVKKIQGS (127 aa).

This sequence in the N-terminal section; belongs to the carbohydrate kinase PfkB family. The protein in the C-terminal section; belongs to the cytidylyltransferase family. As to quaternary structure, homodimer.

It carries out the reaction D-glycero-beta-D-manno-heptose 7-phosphate + ATP = D-glycero-beta-D-manno-heptose 1,7-bisphosphate + ADP + H(+). The catalysed reaction is D-glycero-beta-D-manno-heptose 1-phosphate + ATP + H(+) = ADP-D-glycero-beta-D-manno-heptose + diphosphate. It functions in the pathway nucleotide-sugar biosynthesis; ADP-L-glycero-beta-D-manno-heptose biosynthesis; ADP-L-glycero-beta-D-manno-heptose from D-glycero-beta-D-manno-heptose 7-phosphate: step 1/4. It participates in nucleotide-sugar biosynthesis; ADP-L-glycero-beta-D-manno-heptose biosynthesis; ADP-L-glycero-beta-D-manno-heptose from D-glycero-beta-D-manno-heptose 7-phosphate: step 3/4. Its function is as follows. Catalyzes the phosphorylation of D-glycero-D-manno-heptose 7-phosphate at the C-1 position to selectively form D-glycero-beta-D-manno-heptose-1,7-bisphosphate. Catalyzes the ADP transfer from ATP to D-glycero-beta-D-manno-heptose 1-phosphate, yielding ADP-D-glycero-beta-D-manno-heptose. The chain is Bifunctional protein HldE from Wolinella succinogenes (strain ATCC 29543 / DSM 1740 / CCUG 13145 / JCM 31913 / LMG 7466 / NCTC 11488 / FDC 602W) (Vibrio succinogenes).